We begin with the raw amino-acid sequence, 567 residues long: Maltase A2 (567 aa).

The first 23 residues, 1–23 (MPKWAHLGLAALLLISTTQEGTA), serve as a signal peptide directing secretion. N30, N124, and N198 each carry an N-linked (GlcNAc...) asparagine glycan. The active-site Nucleophile is D226. Residue E298 is the Proton donor of the active site. N312 is a glycosylation site (N-linked (GlcNAc...) asparagine).

Belongs to the glycosyl hydrolase 13 family.

The catalysed reaction is Hydrolysis of terminal, non-reducing (1-&gt;4)-linked alpha-D-glucose residues with release of alpha-D-glucose.. The protein is Maltase A2 (Mal-A2) of Drosophila melanogaster (Fruit fly).